The chain runs to 117 residues: uncharacterized protein (117 aa).

The protein resides in the cytoplasm. It is found in the nucleus. This is an uncharacterized protein from Schizosaccharomyces pombe (strain 972 / ATCC 24843) (Fission yeast).